We begin with the raw amino-acid sequence, 174 residues long: uncharacterized protein (174 aa).

Positions Ser42–Arg174 constitute an N-acetyltransferase domain.

This sequence belongs to the acetyltransferase family. Ycf52 subfamily.

The protein localises to the plastid. Its subcellular location is the chloroplast. This is an uncharacterized protein from Porphyra purpurea (Red seaweed).